The sequence spans 111 residues: Somatostatin-1B (111 aa).

A signal peptide spans 1–19 (MQLLSSLVSLLLVLYSVRA). Positions 20–87 (AAVLPVEERN…RLEERAVYNR (68 aa)) are excised as a propeptide. The cysteines at positions 100 and 111 are disulfide-linked.

It belongs to the somatostatin family.

It localises to the secreted. Somatostatin inhibits the release of somatotropin. The sequence is that of Somatostatin-1B (sst1b) from Carassius auratus (Goldfish).